The following is a 418-amino-acid chain: Voltage-gated ClC-type chloride channel ClcB (418 aa).

Helical transmembrane passes span 5 to 25 (LLIA…FRHA), 54 to 74 (LLTP…WQKF), 146 to 166 (LWIA…PLAG), 168 to 188 (LFIA…PVII), 222 to 242 (ALII…LTLM), 258 to 278 (WQLA…PAVW), 291 to 311 (APPL…AVLA), 316 to 336 (GAPG…GMLY), 352 to 372 (LLLG…APIM), and 380 to 400 (MTGE…ASVI).

This sequence belongs to the chloride channel (TC 2.A.49) family. ClcB subfamily.

It is found in the cell inner membrane. Probably acts as an electrical shunt for an outwardly-directed proton pump that is linked to amino acid decarboxylation, as part of the extreme acid resistance (XAR) response. The chain is Voltage-gated ClC-type chloride channel ClcB from Escherichia coli (strain ATCC 8739 / DSM 1576 / NBRC 3972 / NCIMB 8545 / WDCM 00012 / Crooks).